The primary structure comprises 136 residues: Peptide methionine sulfoxide reductase MsrB (136 aa).

Residues 13–135 (ENDWRSKLTP…NSASLDFKDK (123 aa)) form the MsrB domain. Zn(2+) contacts are provided by cysteine 52, cysteine 55, cysteine 101, and cysteine 104. Cysteine 124 functions as the Nucleophile in the catalytic mechanism.

It belongs to the MsrB Met sulfoxide reductase family. Zn(2+) serves as cofactor.

It catalyses the reaction L-methionyl-[protein] + [thioredoxin]-disulfide + H2O = L-methionyl-(R)-S-oxide-[protein] + [thioredoxin]-dithiol. This chain is Peptide methionine sulfoxide reductase MsrB, found in Synechococcus sp. (strain RCC307).